A 152-amino-acid polypeptide reads, in one-letter code: DNA-binding transcriptional activator DecR (152 aa).

One can recognise an HTH asnC-type domain in the interval 2-63 (LDKIDRKLLA…LLDPEKIGLG (62 aa)). The H-T-H motif DNA-binding region spans 21-40 (LQALAEAVNLTTTPCWKRLK).

In terms of biological role, plays a role in L-cysteine detoxification. Binds to the dlsT(yhaO)-yhaM operon promoter in the presence but not absence of L-cysteine; activates transcription from the dlsT(yhaO)-yhaM operon. The polypeptide is DNA-binding transcriptional activator DecR (decR) (Escherichia coli O157:H7).